The primary structure comprises 401 residues: Enoyl-[acyl-carrier-protein] reductase [NADH] (401 aa).

NAD(+) is bound by residues 48–53 (GSSSGY), 74–75 (FE), 111–112 (DA), and 139–140 (LA). Tyr225 serves as a coordination point for substrate. The active-site Proton donor is Tyr235. NAD(+) contacts are provided by residues Lys244 and 273-275 (VVT).

Belongs to the TER reductase family. As to quaternary structure, monomer.

The catalysed reaction is a 2,3-saturated acyl-[ACP] + NAD(+) = a (2E)-enoyl-[ACP] + NADH + H(+). The protein operates within lipid metabolism; fatty acid biosynthesis. Involved in the final reduction of the elongation cycle of fatty acid synthesis (FAS II). Catalyzes the reduction of a carbon-carbon double bond in an enoyl moiety that is covalently linked to an acyl carrier protein (ACP). This chain is Enoyl-[acyl-carrier-protein] reductase [NADH], found in Shewanella putrefaciens (strain CN-32 / ATCC BAA-453).